Consider the following 121-residue polypeptide: Large ribosomal subunit protein uL22 (121 aa).

This sequence belongs to the universal ribosomal protein uL22 family. As to quaternary structure, part of the 50S ribosomal subunit.

In terms of biological role, this protein binds specifically to 23S rRNA; its binding is stimulated by other ribosomal proteins, e.g. L4, L17, and L20. It is important during the early stages of 50S assembly. It makes multiple contacts with different domains of the 23S rRNA in the assembled 50S subunit and ribosome. The globular domain of the protein is located near the polypeptide exit tunnel on the outside of the subunit, while an extended beta-hairpin is found that lines the wall of the exit tunnel in the center of the 70S ribosome. The protein is Large ribosomal subunit protein uL22 of Synechococcus sp. (strain CC9605).